The chain runs to 105 residues: Thioredoxin (105 aa).

Residues Met-1–Ile-105 form the Thioredoxin domain. Cys-30 and Cys-33 are oxidised to a cystine.

This sequence belongs to the thioredoxin family.

Functionally, component of the thioredoxin-thioredoxin reductase system. Participates in various redox reactions through the reversible oxidation of its active center dithiol to a disulfide and catalyzes dithiol-disulfide exchange reactions. The chain is Thioredoxin (trxA) from Rickettsia prowazekii (strain Madrid E).